The chain runs to 86 residues: Neurotoxin LmNaTx35.2 (86 aa).

An N-terminal signal peptide occupies residues 1–21 (MQLKIQLLMLVLMTVLTGVLG). The region spanning 22–85 (KDGYVVHEDT…VYGDKGTYCW (64 aa)) is the LCN-type CS-alpha/beta domain. 4 disulfides stabilise this stretch: cysteine 33/cysteine 84, cysteine 37/cysteine 60, cysteine 46/cysteine 65, and cysteine 50/cysteine 67.

This sequence belongs to the long (4 C-C) scorpion toxin superfamily. Sodium channel inhibitor family. Alpha subfamily. Expressed by the venom gland.

Its subcellular location is the secreted. Functionally, binds voltage-independently at site-3 of voltage-gated sodium channels (Nav) and inhibits the inactivation of the activated channels, thereby blocking neuronal transmission. The polypeptide is Neurotoxin LmNaTx35.2 (Lychas mucronatus (Chinese swimming scorpion)).